Consider the following 566-residue polypeptide: E3 ubiquitin-protein ligase RNF220 (566 aa).

Residue K277 forms a Glycyl lysine isopeptide (Lys-Gly) (interchain with G-Cter in SUMO2) linkage. Residues 277-297 (KREGESPTASPHSSATDDLHH) are disordered. S390 carries the phosphoserine modification. Residues 485–513 (EDSAVTTFEALKARVRELERQLSRGDRYK) adopt a coiled-coil conformation. Residues 514 to 522 (CLICMDSYS) are required for targeting to the cytoplasm. The RING-type zinc finger occupies 514 to 553 (CLICMDSYSMPLTSIQCWHVHCEECWLRTLGAKKLCPQCN).

Interacts with SIN3B. Interacts with CTNNB1 (via Armadillo repeats 2-8). Interacts with USP7 (via MATH domain). Post-translationally, auto-ubiquitinated; leads to proteasomal degradation. Ubiquitously expressed. Abundant in brain and spinal cord, particularly in the cerebellum and cerebral cortex. In fetal tissues expressed in the cerebellum, spinal cord and cortex.

The protein resides in the cytoplasm. It is found in the nucleus. It carries out the reaction S-ubiquitinyl-[E2 ubiquitin-conjugating enzyme]-L-cysteine + [acceptor protein]-L-lysine = [E2 ubiquitin-conjugating enzyme]-L-cysteine + N(6)-ubiquitinyl-[acceptor protein]-L-lysine.. It participates in protein modification; protein ubiquitination. In terms of biological role, E3 ubiquitin-protein ligase that promotes the ubiquitination and proteasomal degradation of SIN3B. Independently of its E3 ligase activity, acts as a CTNNB1 stabilizer through USP7-mediated deubiquitination of CTNNB1 promoting Wnt signaling. Plays a critical role in the regulation of nuclear lamina. The chain is E3 ubiquitin-protein ligase RNF220 (RNF220) from Homo sapiens (Human).